A 294-amino-acid chain; its full sequence is MGLGHSKAHPRVIKVTPLQSQETETPSTGPVFFALNRNLEEESSFTRLQDQNRTREGQLPPLRETWYGRLPAVSRAMYLDIPLKHEETSIIKRHPPRRIQKLEPIDLPQAITSERLLCHQEGRTKSNTKQENEKKIQLPMYTSGKRQYLHKMKMLEMNHKRQEAQMELRKSLLSKAMLDMQKLKDHNGNKIAQSKPRSNGYDILTILPNENINRDPGNPQDEEFLDCHTENDYYVRKIGKMETWLREQEARGQLFWDSSSSDSDELEKDERRPQALVRTKTEKIPLYDDFYDSA.

Over residues 1–12 (MGLGHSKAHPRV) the composition is skewed to basic residues. Disordered regions lie at residues 1-28 (MGLGHSKAHPRVIKVTPLQSQETETPST) and 255-279 (FWDSSSSDSDELEKDERRPQALVRT). Gly-2 carries the N-myristoyl glycine lipid modification. Polar residues predominate over residues 17–28 (PLQSQETETPST). Positions 268–279 (KDERRPQALVRT) are enriched in basic and acidic residues.

Expressed in proximal tubules of the kidney.

It is found in the cell membrane. It localises to the cytoplasmic vesicle. Its function is as follows. May be involved in tuning the metabolism, energy expenditure, and excretion processes. This Mus musculus (Mouse) protein is Factor associated with metabolism and energy.